A 45-amino-acid chain; its full sequence is MEKKEEQYINQAEYVPHPTKEGEYALFLHETYHLLSEDDETQTTE.

This is an uncharacterized protein from Bacillus subtilis (strain 168).